A 795-amino-acid polypeptide reads, in one-letter code: Phenylalanine--tRNA ligase beta subunit (795 aa).

Positions 39-148 (AGSFHGVVVG…ADAPIGTDIR (110 aa)) constitute a tRNA-binding domain. The 76-residue stretch at 401 to 476 (PKRATITLRR…RVYGYNNIPD (76 aa)) folds into the B5 domain. Mg(2+) contacts are provided by Asp454, Asp460, Glu463, and Glu464. Positions 701–794 (SRFPANRRDI…LKERFQASLR (94 aa)) constitute an FDX-ACB domain.

The protein belongs to the phenylalanyl-tRNA synthetase beta subunit family. Type 1 subfamily. Tetramer of two alpha and two beta subunits. Mg(2+) serves as cofactor.

The protein localises to the cytoplasm. The enzyme catalyses tRNA(Phe) + L-phenylalanine + ATP = L-phenylalanyl-tRNA(Phe) + AMP + diphosphate + H(+). This is Phenylalanine--tRNA ligase beta subunit from Shigella boydii serotype 4 (strain Sb227).